We begin with the raw amino-acid sequence, 702 residues long: p-hydroxybenzoic acid--AMP ligase FadD22 (702 aa).

One can recognise a Carrier domain in the interval 538 to 616 (ERHRLVLDAV…GLAQYLEAEL (79 aa)). Ser-576 is modified (O-(pantetheine 4'-phosphoryl)serine).

Belongs to the ATP-dependent AMP-binding enzyme family.

The catalysed reaction is holo-[4-hydroxyphenylalkanoate synthase] + 4-hydroxybenzoate + ATP = 4-hydroxyphenyl-[4-hydroxyphenylalkanoate synthase] + AMP + diphosphate. The protein operates within lipid metabolism; fatty acid biosynthesis. Functionally, catalyzes the adenylation of p-hydroxybenzoic acid (pHBA) to form p-hydroxybenzoic acid-AMP (pHBA-AMP), which is converted directly to p-hydroxybenzoyl-S-FadD22 (pHBA-S-FAdD22) thioester intermediate in a CoA-independent manner by attack of the phosphopantetheine thiol of FadD22. This intermediate primes the biosynthesis of the phenolphthiocerol (PPOL) by presenting the pHBA starter unit for elongation by Pks15/1. PPOL is an important intermediate in the biosynthesis of phenolic glycolipid (mycosid B). In Mycobacterium marinum (strain ATCC BAA-535 / M), this protein is p-hydroxybenzoic acid--AMP ligase FadD22 (fadD22).